The chain runs to 430 residues: Corticosteroid-binding globulin (430 aa).

The first 22 residues, 1 to 22, serve as a signal peptide directing secretion; that stretch reads MLLTLYTCLLWLSTSGLWTIQA. Asparagine 119, asparagine 175, and asparagine 243 each carry an N-linked (GlcNAc...) asparagine glycan. A cortisol-binding site is contributed by glutamine 253. N-linked (GlcNAc...) asparagine glycosylation is present at asparagine 259. Glutamine 285 contributes to the cortisol binding site. Asparagine 326 carries N-linked (GlcNAc...) asparagine glycosylation. A cortisol-binding site is contributed by tryptophan 392.

The protein belongs to the serpin family. Expressed by the liver; secreted in plasma.

The protein resides in the secreted. Its function is as follows. Major transport protein for glucocorticoids and progestins in the blood of almost all vertebrate species. This Ovis aries (Sheep) protein is Corticosteroid-binding globulin (SERPINA6).